The sequence spans 435 residues: DEAD-box ATP-dependent RNA helicase CshB (435 aa).

The Q motif signature appears at 5–33 (SRFDQFGFQPFIGLAIDKLGFYEPTEVQQ). In terms of domain architecture, Helicase ATP-binding spans 36–208 (IPGILKGESI…SKYMENPRYE (173 aa)). 49–56 (SQTGTGKT) is an ATP binding site. The DEAD box motif lies at 156–159 (DEAD). Residues 235–378 (LLKNVLVGSQ…HVDWKNKEFV (144 aa)) enclose the Helicase C-terminal domain. Residues 383–435 (RNRRAKREAKRETADPREIGMRKKAKQKGKPNYKKKINYKMNEIKRRERRKKR) form a disordered region. Positions 391–403 (AKRETADPREIGM) are enriched in basic and acidic residues. A compositionally biased stretch (basic residues) spans 404–420 (RKKAKQKGKPNYKKKIN).

Belongs to the DEAD box helicase family. CshB subfamily.

Its subcellular location is the cytoplasm. The enzyme catalyses ATP + H2O = ADP + phosphate + H(+). Its function is as follows. DEAD-box RNA helicase involved in cold tolerance, motility, and tolerance to heat, alkali and oxidative stress. In Listeria monocytogenes serovar 1/2a (strain ATCC BAA-679 / EGD-e), this protein is DEAD-box ATP-dependent RNA helicase CshB.